Here is a 206-residue protein sequence, read N- to C-terminus: tRNA(Phe) 7-((3-amino-3-carboxypropyl)-4-demethylwyosine(37)-N(4))-methyltransferase 2 (206 aa).

It belongs to the TYW3 family.

It carries out the reaction 4-demethyl-7-[(3S)-3-amino-3-carboxypropyl]wyosine(37) in tRNA(Phe) + S-adenosyl-L-methionine = 7-[(3S)-3-amino-3-carboxypropyl]wyosine(37) in tRNA(Phe) + S-adenosyl-L-homocysteine + H(+). Functionally, S-adenosyl-L-methionine-dependent methyltransferase that acts as a component of the wyosine derivatives biosynthesis pathway. Probably methylates N-4 position of wybutosine-86 to produce wybutosine-72. This chain is tRNA(Phe) 7-((3-amino-3-carboxypropyl)-4-demethylwyosine(37)-N(4))-methyltransferase 2, found in Pyrococcus abyssi (strain GE5 / Orsay).